A 55-amino-acid polypeptide reads, in one-letter code: Accessory gland-specific peptide 70A (55 aa).

The first 19 residues, 1–19 (MKTLSLFLVLVCLLGLVQS), serve as a signal peptide directing secretion. A hydroxyproline mark is found at Pro28, Pro32, Pro34, and Pro38. A disulfide bond links Cys43 and Cys55.

Main cells of the accessory glands of males (paragonial gland).

It is found in the secreted. In terms of biological role, represses female sexual receptivity and stimulates oviposition. The polypeptide is Accessory gland-specific peptide 70A (Acp70A) (Drosophila mauritiana (Fruit fly)).